The chain runs to 667 residues: Transcription factor 4 (667 aa).

Residues 1–83 form an essential for MYOD1 inhibition region; the sequence is MHHQQRMAAL…GTPYDHMTSR (83 aa). The short motif at 18–26 is the 9aaTAD element; that stretch reads DLLDFSAMF. Disordered stretches follow at residues 24–245, 263–321, 336–379, 466–570, and 634–667; these read AMFS…LGNS, LSYP…SQTG, HTNN…EGPL, SLLP…MANN, and KRRE…MGQM. Positions 29-49 are enriched in polar residues; that stretch reads PVSSGKNGPTSLASGHFTGSN. 3 positions are modified to phosphoserine: S66, S87, and S92. Polar residues-rich tracts occupy residues 107–126, 137–155, 205–216, and 266–306; these read GSYS…QQSL, GTLS…SSNN, KPATSTFPSSFF, and PSHS…TDSI. The segment covering 337-348 has biased composition (low complexity); the sequence is TNNSFSSNPSTP. Positions 365–374 are enriched in polar residues; that stretch reads NGGQASSSPN. Phosphoserine is present on S372. The leucine-zipper stretch occupies residues 379–400; it reads LHSLQSRIEDRLERLDDAIHVL. Low complexity-rich tracts occupy residues 467-480 and 503-512; these read LLPN…LPVQ and GQSVSSGSSE. Position 515 is a phosphoserine (S515). Basic and acidic residues-rich tracts occupy residues 527–542 and 555–570; these read KSSE…KDIK and PEQK…MANN. Positions 564-617 constitute a bHLH domain; it reads ERRMANNARERLRVRDINEAFKELGRMVQLHLKSDKPQTKLLILHQAVAVILSL. The class A specific domain stretch occupies residues 619-642; sequence QQVRERNLNPKAACLKRREEEKVS.

As to quaternary structure, efficient DNA binding requires dimerization with another bHLH protein. Forms homo- or heterooligomers with myogenin. Interacts with HIVEP2. Interacts with NEUROD2. Interacts with AGBL1. Interacts with BHLHA9. In terms of tissue distribution, expressed in adult heart, brain, placenta, skeletal muscle and to a lesser extent in the lung. In developing embryonic tissues, expression mostly occurs in the brain.

It localises to the nucleus. Functionally, transcription factor that binds to the immunoglobulin enhancer Mu-E5/KE5-motif. Involved in the initiation of neuronal differentiation. Activates transcription by binding to the E box (5'-CANNTG-3'). Binds to the E-box present in the somatostatin receptor 2 initiator element (SSTR2-INR) to activate transcription. Preferentially binds to either 5'-ACANNTGT-3' or 5'-CCANNTGG-3'. The chain is Transcription factor 4 (TCF4) from Homo sapiens (Human).